Consider the following 381-residue polypeptide: Sulfate/thiosulfate import ATP-binding protein CysA (381 aa).

One can recognise an ABC transporter domain in the interval 3-233 (ILVYEVSKSL…PIDYFVGIFS (231 aa)). 35 to 42 (GPSGSGKS) provides a ligand contact to ATP.

It belongs to the ABC transporter superfamily. Sulfate/tungstate importer (TC 3.A.1.6) family.

The protein localises to the plastid. Its subcellular location is the chloroplast. It catalyses the reaction sulfate(out) + ATP + H2O = sulfate(in) + ADP + phosphate + H(+). The catalysed reaction is thiosulfate(out) + ATP + H2O = thiosulfate(in) + ADP + phosphate + H(+). Part of the ABC transporter complex involved in sulfate/thiosulfate import. Responsible for energy coupling to the transport system. This is Sulfate/thiosulfate import ATP-binding protein CysA from Anthoceros angustus (Hornwort).